An 816-amino-acid chain; its full sequence is Two pore channel protein 1 (816 aa).

Over 1–112 the chain is Cytoplasmic; sequence MAVSLDDDVP…AHNHLFYLME (112 aa). A disordered region spans residues 17–64; that stretch reads EGGSAPLAPSNGLGQEELPSKNGGSYAIHDSQAPSLSSGGESSPSSPA. Low complexity predominate over residues 50-63; the sequence is PSLSSGGESSPSSP. The chain crosses the membrane as a helical span at residues 113–133; that stretch reads LATALLLLLLSLCEAPAVPAL. Residue R134 is a topological domain, extracellular. A helical transmembrane segment spans residues 135 to 155; the sequence is LGIYVHATLELFALMVVVFEL. The Cytoplasmic segment spans residues 156-177; sequence CMKLRWLGLHTFIRHKRTMVKT. Residues 178-198 traverse the membrane as a helical segment; that stretch reads SVLVVQFVEAIVVLVRQMSHV. Residues 199 to 200 are Extracellular-facing; sequence RV. The helical transmembrane segment at 201–220 threads the bilayer; sequence TRALRCIFLVDCRYCGGVRR. At 221 to 234 the chain is on the cytoplasmic side; that stretch reads NLRQIFQSLPPFMD. A helical membrane pass occupies residues 235-255; the sequence is ILLLLLFFMIIFAILGFYLFS. At 256–262 the chain is on the extracellular side; that stretch reads PNPSDPY. Positions 263–286 form an intramembrane region, helical; Pore-forming; sequence FSTLENSIVSLFVLLTTANFPDVM. Residues 287–294 lie on the Extracellular side of the membrane; it reads MPSYSRNP. A helical transmembrane segment spans residues 295 to 315; that stretch reads WSCVFFIVYLSIELYFIMNLL. Residues 316–444 are Cytoplasmic-facing; sequence LAVVFDTFND…NILVKSKAFQ (129 aa). The helical transmembrane segment at 445–465 threads the bilayer; the sequence is YFMYLVVAVNGVWILVETFML. Residues 466-479 lie on the Extracellular side of the membrane; that stretch reads KGGNFFSKHVPWSY. The chain crosses the membrane as a helical span at residues 480-500; that stretch reads LVFLTIYGVELFLKVAGLGPV. Over 501–503 the chain is Cytoplasmic; it reads EYL. A helical membrane pass occupies residues 504 to 526; it reads SSGWNLFDFSVTVFAFLGLLALA. Residues 527–534 are Extracellular-facing; it reads LNMEPFYF. The helical transmembrane segment at 535–549 threads the bilayer; it reads IVVLRPLQLLRLFKL. The Cytoplasmic segment spans residues 550 to 573; the sequence is KERYRNVLDTMFELLPRMASLGLT. Residues 574 to 594 traverse the membrane as a helical segment; sequence LLIFYYSFAIVGMEFFCGIVF. The Extracellular portion of the chain corresponds to 595–629; sequence PNCCNTSTVADAYRWRNHTVGNRTVVEEGYYYLNN. N-linked (GlcNAc...) asparagine glycans are attached at residues N599, N611, and N616. Positions 630–653 form an intramembrane region, helical; Pore-forming; sequence FDNILNSFVTLFELTVVNNWYIIM. Residues 654-670 lie on the Extracellular side of the membrane; that stretch reads EGVTSQTSHWSRLYFMT. A helical transmembrane segment spans residues 671 to 691; that stretch reads FYIVTMVVMTIIVAFILEAFV. At 692–816 the chain is on the cytoplasmic side; sequence FRMNYSRKNQ…GSRQRSQTVT (125 aa). The stretch at 769–796 forms a coiled coil; sequence SLKMYQEEIQEWYEEHAREQEQQRQLSS. A disordered region spans residues 782-816; the sequence is EEHAREQEQQRQLSSSAAPAAQQPPGSRQRSQTVT. A compositionally biased stretch (low complexity) spans 791 to 816; that stretch reads QRQLSSSAAPAAQQPPGSRQRSQTVT.

The protein belongs to the calcium channel alpha-1 subunit (TC 1.A.1.11) family. Two pore calcium channel subfamily. As to quaternary structure, dimer. Interacts with MTOR; the interaction is required for TPCN1 ATP sensitivity. Interacts with STX7, STX8 and STX12. Interacts with JPT2. Found in a complex with LSM12, TPCN1 and TPCN2. In terms of processing, N-glycosylated. As to expression, highest expression found in the heart and kidney, and lowest expression found in the spleen.

It is found in the lysosome membrane. The protein resides in the endosome membrane. It localises to the early endosome membrane. The protein localises to the recycling endosome membrane. It catalyses the reaction Na(+)(in) = Na(+)(out). The enzyme catalyses Ca(2+)(in) = Ca(2+)(out). Na(+) current is inhibited by ATP in a MTORC-dependent manner. ATP sensitivity is independent of PI(3,5)P2. Probably regulated by Mg(2+) ions, cytosolic Mg(2+) selectively inhibits outward current while lysosomal Mg(2+) modestly inhibits both the outward and inward currents. In the absence of Mg(2+), NAADP readily activates TPCN2, with properties similar to PI(3,5)P2. Both current elicited by PI(3,5)P2 as well as NAADP are inhibited by tetrandrine. Functionally, intracellular channel initially characterized as a non-selective Ca(2+)-permeable channel activated by NAADP (nicotinic acid adenine dinucleotide phosphate), it is also a voltage-gated highly-selective Na(+) channel activated directly by PI(3,5)P2 (phosphatidylinositol 3,5-bisphosphate) that senses pH changes and confers electrical excitability to organelles. Localizes to the early and recycling endosomes membranes where it plays a role in the uptake and processing of proteins and regulates organellar membrane excitability, membrane trafficking and pH homeostasis. Ion selectivity is not fixed but rather agonist-dependent and under defined ionic conditions, can be readily activated by both NAADP and PI(3,5)P2. Required for mTOR-dependent nutrient sensing. (Microbial infection) During Ebola virus (EBOV) infection, controls the movement of endosomes containing virus particles and is required by EBOV to escape from the endosomal network into the cell cytoplasm. The chain is Two pore channel protein 1 from Homo sapiens (Human).